Here is a 189-residue protein sequence, read N- to C-terminus: MIDQFERLPGIGPRTAQRLALHLLRQPEDQIRAFAEALLAARSQVGQCQTCFHLSAEPLCDICRDGTRCDQLLCVVADSRDLLALERTREYKGRYHVLGGLISPMDGIGPDMLQIPSLIQRVDRDGISEVILALTPSVEGDTTSLYLARLLKPFTQVSRIAYGLPVGSELEYADEVTLTRALEGRRAMQ.

Residues Cys48–Cys63 form a C4-type zinc finger. The region spanning Gln71 to Pro165 is the Toprim domain.

The protein belongs to the RecR family.

Functionally, may play a role in DNA repair. It seems to be involved in an RecBC-independent recombinational process of DNA repair. It may act with RecF and RecO. The sequence is that of Recombination protein RecR from Prochlorococcus marinus (strain MIT 9303).